Here is a 98-residue protein sequence, read N- to C-terminus: U10-barytoxin-Tl1a (98 aa).

Positions 1 to 21 are cleaved as a signal peptide; the sequence is MKTLVLVAVLGVASLYLLSSA. Residues 22-50 constitute a propeptide that is removed on maturation; it reads SEVQQLSPAEEEFRAFVSTFGGLFETEER. Cystine bridges form between C57-C71, C64-C76, and C70-C89.

The protein belongs to the neurotoxin 10 (Hwtx-1) family. 27 (ICK-3) subfamily. In terms of tissue distribution, expressed by the venom gland.

The protein localises to the secreted. In terms of biological role, ion channel inhibitor. The protein is U10-barytoxin-Tl1a of Trittame loki (Brush-footed trapdoor spider).